We begin with the raw amino-acid sequence, 360 residues long: MSKQILILPGDGIGPEIMAEAVKVLELANEKYSLGFELSHDVIGGAAIDKHGVPLADETLDRARAADAVLLGAVGGPKWDTIERDIRPERGLLKIRAQLGLFGNLRPAILYPQLADASSLKPEIAAGLDILIVRELTGGIYFGAPRGTRTLENGERQSYDTLPYSESEIRRIARVGFDMARVRGKKLCSVDKANVLASSQLWREVVEQVAKDYPDVELSHMYVDNAAMQLVRAPKQFDVIVTDNMFGDILSDEASMLTGSIGMLPSASLDANNKGMYEPCHGSAPDIAGKGIANPLATILSVSMMLRYSFNLHEAADAIEKAVSVVLDQGLRTGDIFSTGCTKVGTQEMGDAVVAALRNL.

76–89 lines the NAD(+) pocket; sequence GPKWDTIERDIRPE. Residues Arg-96, Arg-106, Arg-134, and Asp-224 each contribute to the substrate site. Positions 224, 248, and 252 each coordinate Mg(2+). An NAD(+)-binding site is contributed by 282 to 294; sequence GSAPDIAGKGIAN.

It belongs to the isocitrate and isopropylmalate dehydrogenases family. LeuB type 1 subfamily. As to quaternary structure, homodimer. Mg(2+) is required as a cofactor. Mn(2+) serves as cofactor.

Its subcellular location is the cytoplasm. It carries out the reaction (2R,3S)-3-isopropylmalate + NAD(+) = 4-methyl-2-oxopentanoate + CO2 + NADH. It functions in the pathway amino-acid biosynthesis; L-leucine biosynthesis; L-leucine from 3-methyl-2-oxobutanoate: step 3/4. Functionally, catalyzes the oxidation of 3-carboxy-2-hydroxy-4-methylpentanoate (3-isopropylmalate) to 3-carboxy-4-methyl-2-oxopentanoate. The product decarboxylates to 4-methyl-2 oxopentanoate. This is 3-isopropylmalate dehydrogenase from Pseudomonas fluorescens (strain Pf0-1).